The sequence spans 515 residues: Anthranilate synthase component 1 (515 aa).

Residues Ser50 and 281-283 (PYM) contribute to the L-tryptophan site. 316 to 317 (GT) serves as a coordination point for chorismate. A Mg(2+)-binding site is contributed by Glu343. Chorismate-binding positions include Tyr431, Arg451, 465 to 467 (GAG), and Gly467. Glu480 serves as a coordination point for Mg(2+).

This sequence belongs to the anthranilate synthase component I family. As to quaternary structure, heterotetramer consisting of two non-identical subunits: a beta subunit (TrpG) and a large alpha subunit (TrpE). Requires Mg(2+) as cofactor.

The catalysed reaction is chorismate + L-glutamine = anthranilate + pyruvate + L-glutamate + H(+). It functions in the pathway amino-acid biosynthesis; L-tryptophan biosynthesis; L-tryptophan from chorismate: step 1/5. Feedback inhibited by tryptophan. In terms of biological role, part of a heterotetrameric complex that catalyzes the two-step biosynthesis of anthranilate, an intermediate in the biosynthesis of L-tryptophan. In the first step, the glutamine-binding beta subunit (TrpG) of anthranilate synthase (AS) provides the glutamine amidotransferase activity which generates ammonia as a substrate that, along with chorismate, is used in the second step, catalyzed by the large alpha subunit of AS (TrpE) to produce anthranilate. In the absence of TrpG, TrpE can synthesize anthranilate directly from chorismate and high concentrations of ammonia. The polypeptide is Anthranilate synthase component 1 (trpE) (Bacillus subtilis (strain 168)).